The primary structure comprises 223 residues: Cytidylate kinase (223 aa).

ATP is bound at residue 10–18 (GPAGSGKSS).

The protein belongs to the cytidylate kinase family. Type 1 subfamily.

It localises to the cytoplasm. It carries out the reaction CMP + ATP = CDP + ADP. The enzyme catalyses dCMP + ATP = dCDP + ADP. In Pseudothermotoga lettingae (strain ATCC BAA-301 / DSM 14385 / NBRC 107922 / TMO) (Thermotoga lettingae), this protein is Cytidylate kinase.